The primary structure comprises 119 residues: Ribonuclease P protein component (119 aa).

The protein belongs to the RnpA family. As to quaternary structure, consists of a catalytic RNA component (M1 or rnpB) and a protein subunit.

It carries out the reaction Endonucleolytic cleavage of RNA, removing 5'-extranucleotides from tRNA precursor.. Its function is as follows. RNaseP catalyzes the removal of the 5'-leader sequence from pre-tRNA to produce the mature 5'-terminus. It can also cleave other RNA substrates such as 4.5S RNA. The protein component plays an auxiliary but essential role in vivo by binding to the 5'-leader sequence and broadening the substrate specificity of the ribozyme. In Listeria monocytogenes serotype 4b (strain CLIP80459), this protein is Ribonuclease P protein component.